The following is a 239-amino-acid chain: Ribonuclease 3 (239 aa).

Residues 12-137 (RAKLEALIGH…LIAAIYLDGG (126 aa)) form the RNase III domain. Glu-50 lines the Mg(2+) pocket. Residue Asp-54 is part of the active site. Positions 123 and 126 each coordinate Mg(2+). Glu-126 is a catalytic residue. The DRBM domain occupies 162 to 231 (DAKTELQEWS…ATKMLEREGI (70 aa)).

It belongs to the ribonuclease III family. In terms of assembly, homodimer. Mg(2+) serves as cofactor.

It is found in the cytoplasm. The catalysed reaction is Endonucleolytic cleavage to 5'-phosphomonoester.. In terms of biological role, digests double-stranded RNA. Involved in the processing of primary rRNA transcript to yield the immediate precursors to the large and small rRNAs (23S and 16S). Processes some mRNAs, and tRNAs when they are encoded in the rRNA operon. Processes pre-crRNA and tracrRNA of type II CRISPR loci if present in the organism. This chain is Ribonuclease 3, found in Rhizobium etli (strain ATCC 51251 / DSM 11541 / JCM 21823 / NBRC 15573 / CFN 42).